The following is an 83-amino-acid chain: Short neurotoxin VAN-10 (83 aa).

The first 21 residues, 1–21 (MKTLLLTLVVVTIVCLDLGYT), serve as a signal peptide directing secretion. 4 disulfide bridges follow: Cys-24–Cys-45, Cys-38–Cys-62, Cys-64–Cys-75, and Cys-76–Cys-81.

Belongs to the three-finger toxin family. Short-chain subfamily. Type I alpha-neurotoxin sub-subfamily. Expressed by the venom gland.

It is found in the secreted. Binds to muscle nicotinic acetylcholine receptor (nAChR) and inhibit acetylcholine from binding to the receptor, thereby impairing neuromuscular transmission. The sequence is that of Short neurotoxin VAN-10 from Laticauda laticaudata (Blue-ringed sea krait).